Here is a 594-residue protein sequence, read N- to C-terminus: Tripeptidyl-peptidase sed4 (594 aa).

Residues 1 to 20 form the signal peptide; the sequence is MLSSTLYAGWLLSLAAPALC. A propeptide spans 21–187 (removed in mature form); the sequence is VVQEKLSAVP…AVKLPALPRR (167 aa). Residues N191, N229, and N250 are each glycosylated (N-linked (GlcNAc...) asparagine). Residues 197-594 form the Peptidase S53 domain; it reads LITPDCLVEM…MKLKELVLSL (398 aa). Residues E272, D276, and S494 each act as charge relay system in the active site. Ca(2+) is bound by residues D536 and I537. N568 carries an N-linked (GlcNAc...) asparagine glycan. 2 residues coordinate Ca(2+): G572 and D574.

Ca(2+) is required as a cofactor. Post-translationally, N-glycosylated.

It is found in the secreted. The protein localises to the extracellular space. The enzyme catalyses Release of an N-terminal tripeptide from a polypeptide.. In terms of biological role, secreted tripeptidyl-peptidase which degrades proteins at acidic pHs and is involved in virulence. The polypeptide is Tripeptidyl-peptidase sed4 (sed4) (Aspergillus fumigatus (strain ATCC MYA-4609 / CBS 101355 / FGSC A1100 / Af293) (Neosartorya fumigata)).